The primary structure comprises 1026 residues: P3N-PIPO polyprotein (1026 aa).

A Peptidase S30 domain is found at 165-308 (RMSEASLQLF…KEQSNEIVHY (144 aa)). Active-site for P1 proteinase activity residues include histidine 216, aspartate 225, and serine 259. The short motif at 360–363 (KITC) is the Involved in interaction with stylet and aphid transmission element. The Involved in virions binding and aphid transmission signature appears at 618-620 (PTK). Residues 644 to 766 (MFIAKAGYCY…DSSMKTYLVG (123 aa)) form the Peptidase C6 domain. Active-site for helper component proteinase activity residues include cysteine 652 and histidine 725.

The protein belongs to the potyviridae P3N-PIPO polyprotein family. Interacts (via PIPO domain) with host PCaP1 protein; this interaction may help to anchor the movement complex to the plasma membrane from which the complex could move to the plasmodesmata. Potyviral RNA is expressed as two polyproteins which undergo post-translational proteolytic processing. Genome polyprotein is processed by NIa-pro, P1 and HC-pro proteinases resulting in the production of at least ten individual proteins. P3N-PIPO is cleaved by P1 and HC-pro proteinases resulting in the production of three individual proteins. The P1 proteinase and the HC-pro cleave only their respective C-termini autocatalytically.

It is found in the host cell junction. Its subcellular location is the host plasmodesma. The catalysed reaction is Hydrolyzes a Gly-|-Gly bond at its own C-terminus, commonly in the sequence -Tyr-Xaa-Val-Gly-|-Gly, in the processing of the potyviral polyprotein.. Its function is as follows. Required for aphid transmission and also has proteolytic activity. Only cleaves a Gly-Gly dipeptide at its own C-terminus. Interacts with virions and aphid stylets. Acts as a suppressor of RNA-mediated gene silencing, also known as post-transcriptional gene silencing (PTGS), a mechanism of plant viral defense that limits the accumulation of viral RNAs. May have RNA-binding activity. In terms of biological role, allows efficient cell to cell propagation, by bypassing the host cell wall barrier. Transports viral genome to neighboring plant cells directly through plasmosdesmata, without any budding. The sequence is that of P3N-PIPO polyprotein from Prunus armeniaca (Apricot).